The sequence spans 449 residues: Wilms tumor protein homolog (449 aa).

Residues 49 to 84 (YGSLGGPAPPPAPPPPPPPPHSFIKQEPSWGGAEPH) form a disordered region. The span at 55-69 (PAPPPAPPPPPPPPH) shows a compositional bias: pro residues. Glycyl lysine isopeptide (Lys-Gly) (interchain with G-Cter in SUMO) cross-links involve residues K73 and K177. A 9aaTAD motif is present at residues 236 to 244 (MTWNQMNLG). 3 C2H2-type zinc fingers span residues 323-347 (FMCAYPGCNKRYFKLSHLQMHSRKH), 353-377 (YQCDFKDCERRFSRSDQLKRHQRRH), and 383-405 (FQCKTCQRKFSRSDHLKTHTRTH). Important for interaction with target DNA stretches follow at residues 367 to 381 (SDQLKRHQRRHTGVK) and 393 to 401 (SRSDHLKTH). Residues 408 to 410 (KTS) carry the KTS motif motif. The C2H2-type 4 zinc-finger motif lies at 414–438 (FSCRWHSCQKKFARSDELVRHHNMH). A Glycyl lysine isopeptide (Lys-Gly) (interchain with G-Cter in SUMO2) cross-link involves residue K444.

This sequence belongs to the EGR C2H2-type zinc-finger protein family. As to quaternary structure, interacts with ZNF224 via the zinc-finger region. Interacts with WTAP, AMER1 and SRY. Interacts with RBM4. Homodimer. Interacts with WTIP. Interacts with actively translating polysomes. Detected in nuclear ribonucleoprotein (mRNP) particles. Interacts with U2AF2. Interacts with HNRNPU via the zinc-finger region. Isoform 1 and isoform 3 interacts with CITED2. In terms of tissue distribution, detected in neurons of the embryonic dorsal root ganglion and in Sertoli cells of the adult testis (at protein level). Detected in kidney.

Its subcellular location is the nucleus speckle. It is found in the nucleus. It localises to the nucleoplasm. The protein resides in the nucleolus. The protein localises to the cytoplasm. Transcription factor that plays an important role in cellular development and cell survival. Recognizes and binds to the DNA sequence 5'-GCG(T/G)GGGCG-3'. Regulates the expression of numerous target genes, including EPO. Plays an essential role for development of the urogenital system. It has a tumor suppressor as well as an oncogenic role in tumor formation. Function may be isoform-specific: isoforms lacking the KTS motif may act as transcription factors. Isoforms containing the KTS motif may bind mRNA and play a role in mRNA metabolism or splicing. Isoform 1 has lower affinity for DNA, and can bind RNA. The polypeptide is Wilms tumor protein homolog (Wt1) (Mus musculus (Mouse)).